Here is a 438-residue protein sequence, read N- to C-terminus: V-type ATP synthase beta chain (438 aa).

This sequence belongs to the ATPase alpha/beta chains family.

Its function is as follows. Produces ATP from ADP in the presence of a proton gradient across the membrane. The V-type beta chain is a regulatory subunit. The chain is V-type ATP synthase beta chain from Protochlamydia amoebophila (strain UWE25).